The primary structure comprises 295 residues: ATP synthase gamma chain (295 aa).

The protein belongs to the ATPase gamma chain family. F-type ATPases have 2 components, CF(1) - the catalytic core - and CF(0) - the membrane proton channel. CF(1) has five subunits: alpha(3), beta(3), gamma(1), delta(1), epsilon(1). CF(0) has three main subunits: a, b and c.

The protein resides in the cell inner membrane. Functionally, produces ATP from ADP in the presence of a proton gradient across the membrane. The gamma chain is believed to be important in regulating ATPase activity and the flow of protons through the CF(0) complex. In Methylorubrum populi (strain ATCC BAA-705 / NCIMB 13946 / BJ001) (Methylobacterium populi), this protein is ATP synthase gamma chain.